The sequence spans 462 residues: ATP synthase subunit beta 1 (462 aa).

152-159 (GGAGVGKT) is a binding site for ATP.

Belongs to the ATPase alpha/beta chains family. In terms of assembly, F-type ATPases have 2 components, CF(1) - the catalytic core - and CF(0) - the membrane proton channel. CF(1) has five subunits: alpha(3), beta(3), gamma(1), delta(1), epsilon(1). CF(0) has four main subunits: a(1), b(1), b'(1) and c(9-12).

The protein localises to the cell inner membrane. The catalysed reaction is ATP + H2O + 4 H(+)(in) = ADP + phosphate + 5 H(+)(out). Produces ATP from ADP in the presence of a proton gradient across the membrane. The catalytic sites are hosted primarily by the beta subunits. This chain is ATP synthase subunit beta 1, found in Dinoroseobacter shibae (strain DSM 16493 / NCIMB 14021 / DFL 12).